A 100-amino-acid chain; its full sequence is Large ribosomal subunit protein uL23 (100 aa).

It belongs to the universal ribosomal protein uL23 family. As to quaternary structure, part of the 50S ribosomal subunit. Contacts protein L29, and trigger factor when it is bound to the ribosome.

Its function is as follows. One of the early assembly proteins it binds 23S rRNA. One of the proteins that surrounds the polypeptide exit tunnel on the outside of the ribosome. Forms the main docking site for trigger factor binding to the ribosome. The chain is Large ribosomal subunit protein uL23 from Shewanella halifaxensis (strain HAW-EB4).